Consider the following 479-residue polypeptide: RAC-gamma serine/threonine-protein kinase (479 aa).

Serine 2 is subject to N-acetylserine. The 103-residue stretch at 5–107 (TIVKEGWVQK…WTEAIQAVAD (103 aa)) folds into the PH domain. Cysteine 59 and cysteine 76 are disulfide-bonded. One can recognise a Protein kinase domain in the interval 148–405 (FDYLKLLGKG…AKEIMRHSFF (258 aa)). ATP contacts are provided by residues 154–162 (LGKGTFGKV) and lysine 177. Aspartate 271 functions as the Proton acceptor in the catalytic mechanism. Residues cysteine 293 and cysteine 307 are joined by a disulfide bond. O-linked (GlcNAc) threonine glycosylation occurs at threonine 302. At threonine 305 the chain carries Phosphothreonine; by PDPK1. Residue threonine 309 is glycosylated (O-linked (GlcNAc) threonine). Residues 406–479 (SGVNWQDVYD…QFSYSASGRE (74 aa)) enclose the AGC-kinase C-terminal domain. At threonine 447 the chain carries Phosphothreonine. A disordered region spans residues 458–479 (DCMDNERRPHFPQFSYSASGRE). Serine 472 is subject to Phosphoserine; by PKC/PRKCZ. O-linked (GlcNAc) serine; alternate glycosylation is present at serine 472.

It belongs to the protein kinase superfamily. AGC Ser/Thr protein kinase family. RAC subfamily. In terms of assembly, interacts (via PH domain) with TCL1A; this enhances AKT3 phosphorylation and activation. Interacts with TRAF6. Interacts with KCTD20. Interacts with BTBD10. Phosphorylation on Thr-305 and Ser-472 is required for full activity. Phosphorylation of the activation loop at Thr-305 by PDPK1/PDK1 is a prerequisite for full activation. Phosphorylation at Ser-472 by mTORC2 in response to growth factors plays a key role in AKT1 activation by facilitating subsequent phosphorylation of the activation loop by PDPK1/PDK1. In terms of processing, ubiquitinated. When fully phosphorylated and translocated into the nucleus, undergoes 'Lys-48'-polyubiquitination catalyzed by TTC3, leading to its degradation by the proteasome. Post-translationally, O-GlcNAcylation at Thr-302 and Thr-309 inhibits activating phosphorylation at Thr-305 via disrupting the interaction between AKT and PDPK1/PDK1. As to expression, in adult tissues, it is highly expressed in brain, lung and kidney, but weakly in heart, testis and liver. In fetal tissues, it is highly expressed in heart, liver and brain and not at all in kidney.

Its subcellular location is the nucleus. It localises to the cytoplasm. It is found in the membrane. It catalyses the reaction L-seryl-[protein] + ATP = O-phospho-L-seryl-[protein] + ADP + H(+). The catalysed reaction is L-threonyl-[protein] + ATP = O-phospho-L-threonyl-[protein] + ADP + H(+). With respect to regulation, two specific sites, one in the kinase domain (Thr-305) and the other in the C-terminal regulatory region (Ser-472), need to be phosphorylated for its full activation. IGF-1 leads to the activation of AKT3, which may play a role in regulating cell survival. AKT3 is one of 3 closely related serine/threonine-protein kinases (AKT1, AKT2 and AKT3) called the AKT kinase, and which regulate many processes including metabolism, proliferation, cell survival, growth and angiogenesis. This is mediated through serine and/or threonine phosphorylation of a range of downstream substrates. Over 100 substrate candidates have been reported so far, but for most of them, no isoform specificity has been reported. AKT3 is the least studied AKT isoform. It plays an important role in brain development and is crucial for the viability of malignant glioma cells. AKT3 isoform may also be the key molecule in up-regulation and down-regulation of MMP13 via IL13. Required for the coordination of mitochondrial biogenesis with growth factor-induced increases in cellular energy demands. Down-regulation by RNA interference reduces the expression of the phosphorylated form of BAD, resulting in the induction of caspase-dependent apoptosis. This Homo sapiens (Human) protein is RAC-gamma serine/threonine-protein kinase (AKT3).